Reading from the N-terminus, the 190-residue chain is dCTP deaminase (190 aa).

Residue 113–118 coordinates dCTP; it reads KSTYAR. The active-site Proton donor/acceptor is the E139. Residues Q158, Y172, K181, and Q182 each coordinate dCTP.

Belongs to the dCTP deaminase family. As to quaternary structure, homotrimer.

The catalysed reaction is dCTP + H2O + H(+) = dUTP + NH4(+). It participates in pyrimidine metabolism; dUMP biosynthesis; dUMP from dCTP (dUTP route): step 1/2. Catalyzes the deamination of dCTP to dUTP. This Chlamydia pneumoniae (Chlamydophila pneumoniae) protein is dCTP deaminase.